A 793-amino-acid polypeptide reads, in one-letter code: uncharacterized protein (793 aa).

Positions 1–22 (MKFKYGAIFFSGFLGLSAILAA) are cleaved as a signal peptide. Cys23 carries N-palmitoyl cysteine lipidation. A lipid anchor (S-diacylglycerol cysteine) is attached at Cys23. Disordered regions lie at residues 181 to 200 (LNQK…TLTV), 212 to 264 (KIED…DDQV), and 444 to 504 (KAPS…SNNN). The span at 212-227 (KIEDSAKANGKSDEKG) shows a compositional bias: basic and acidic residues. Residues 237-246 (ATFSLVQLKQ) are compositionally biased toward polar residues. The span at 247 to 264 (TQEKTDDSQDTKNSDDQV) shows a compositional bias: basic and acidic residues. Residues 449–468 (NGENGQTNEGNSTNGEQNLL) show a composition bias toward polar residues. A compositionally biased stretch (basic and acidic residues) spans 472–485 (EVKDDSKPKEEVKS). The segment covering 491-504 (KESSQNQGKKSNNN) has biased composition (low complexity).

It belongs to the MG185/MG260 family.

It localises to the cell membrane. This is an uncharacterized protein from Mycoplasma pneumoniae (strain ATCC 29342 / M129 / Subtype 1) (Mycoplasmoides pneumoniae).